A 259-amino-acid polypeptide reads, in one-letter code: 5'-nucleotidase SurE (259 aa).

4 residues coordinate a divalent metal cation: aspartate 8, aspartate 9, serine 40, and asparagine 95.

Belongs to the SurE nucleotidase family. It depends on a divalent metal cation as a cofactor.

Its subcellular location is the cytoplasm. The catalysed reaction is a ribonucleoside 5'-phosphate + H2O = a ribonucleoside + phosphate. Its function is as follows. Nucleotidase that shows phosphatase activity on nucleoside 5'-monophosphates. This chain is 5'-nucleotidase SurE, found in Oleidesulfovibrio alaskensis (strain ATCC BAA-1058 / DSM 17464 / G20) (Desulfovibrio alaskensis).